The following is a 257-amino-acid chain: Anamorsin homolog (257 aa).

Positions 1–132 (MSVLALDVAR…ARGTAFALKS (132 aa)) are N-terminal SAM-like domain. The linker stretch occupies residues 133-171 (RAVRVNATAADAADAWGASAAADDDELIDESALLTELDV). 4 residues coordinate [2Fe-2S] cluster: Cys181, Cys190, Cys193, and Cys195. The segment at 181-195 (CDVGAGKKACKNCTC) is fe-S binding site A. Positions 219, 222, 230, and 233 each coordinate [4Fe-4S] cluster. 2 consecutive short sequence motifs (cx2C motif) follow at residues 219-222 (CGNC) and 230-233 (CAGC). Residues 219-233 (CGNCALGDAFRCAGC) are fe-S binding site B.

This sequence belongs to the anamorsin family. As to quaternary structure, monomer. [2Fe-2S] cluster is required as a cofactor. Requires [4Fe-4S] cluster as cofactor.

The protein localises to the cytoplasm. Its subcellular location is the mitochondrion intermembrane space. Functionally, component of the cytosolic iron-sulfur (Fe-S) protein assembly (CIA) machinery. Required for the maturation of extramitochondrial Fe-S proteins. Part of an electron transfer chain functioning in an early step of cytosolic Fe-S biogenesis, facilitating the de novo assembly of a [4Fe-4S] cluster on the cytosolic Fe-S scaffold complex. Electrons are transferred from NADPH via a FAD- and FMN-containing diflavin oxidoreductase. Together with the diflavin oxidoreductase, also required for the assembly of the diferric tyrosyl radical cofactor of ribonucleotide reductase (RNR), probably by providing electrons for reduction during radical cofactor maturation in the catalytic small subunit. The sequence is that of Anamorsin homolog from Ostreococcus lucimarinus (strain CCE9901).